The sequence spans 151 residues: Transcriptional repressor NrdR (151 aa).

Residues 3–34 (CPFCSHPDTQVVETREAEDGGFIRRRRQCGGC) fold into a zinc finger. The region spanning 49 to 139 (PAIVKKDGRR…VYRSFEDVDD (91 aa)) is the ATP-cone domain.

It belongs to the NrdR family. It depends on Zn(2+) as a cofactor.

Functionally, negatively regulates transcription of bacterial ribonucleotide reductase nrd genes and operons by binding to NrdR-boxes. The protein is Transcriptional repressor NrdR of Delftia acidovorans (strain DSM 14801 / SPH-1).